A 177-amino-acid chain; its full sequence is Iron-sulfur cluster assembly protein SufA (177 aa).

A signal peptide spans 1–18; the sequence is MTIHIFLCFLLILKIVNA. [4Fe-4S] cluster contacts are provided by cysteine 101, cysteine 169, and cysteine 171.

The protein belongs to the HesB/IscA family. As to quaternary structure, homodimer. Homotetramer formation is observed in vitro.

It is found in the plastid. It localises to the apicoplast. It participates in cofactor biosynthesis; iron-sulfur cluster biosynthesis. Participates in the sulfur mobilization (SUF) pathway for iron-sulfur (Fe-S) cluster biogenesis. Involved in the pre-assembly of [4Fe-4S] clusters and their transfer to target proteins. In Plasmodium falciparum (isolate 3D7), this protein is Iron-sulfur cluster assembly protein SufA.